We begin with the raw amino-acid sequence, 297 residues long: tRNA-cytidine(32) 2-sulfurtransferase (297 aa).

The PP-loop motif signature appears at 45-50 (SGGKDS). [4Fe-4S] cluster-binding residues include C120, C123, and C211.

This sequence belongs to the TtcA family. Homodimer. Mg(2+) is required as a cofactor. The cofactor is [4Fe-4S] cluster.

It is found in the cytoplasm. It carries out the reaction cytidine(32) in tRNA + S-sulfanyl-L-cysteinyl-[cysteine desulfurase] + AH2 + ATP = 2-thiocytidine(32) in tRNA + L-cysteinyl-[cysteine desulfurase] + A + AMP + diphosphate + H(+). It participates in tRNA modification. Functionally, catalyzes the ATP-dependent 2-thiolation of cytidine in position 32 of tRNA, to form 2-thiocytidine (s(2)C32). The sulfur atoms are provided by the cysteine/cysteine desulfurase (IscS) system. This is tRNA-cytidine(32) 2-sulfurtransferase from Vibrio campbellii (strain ATCC BAA-1116).